The following is a 212-amino-acid chain: Large ribosomal subunit protein uL3 (212 aa).

The interval 135-161 is disordered; the sequence is MTHGNSLSHRAPGSIGQNQSPGKVFKG. An N5-methylglutamine modification is found at Q153.

The protein belongs to the universal ribosomal protein uL3 family. In terms of assembly, part of the 50S ribosomal subunit. Forms a cluster with proteins L14 and L19. Post-translationally, methylated by PrmB.

In terms of biological role, one of the primary rRNA binding proteins, it binds directly near the 3'-end of the 23S rRNA, where it nucleates assembly of the 50S subunit. This Alteromonas mediterranea (strain DSM 17117 / CIP 110805 / LMG 28347 / Deep ecotype) protein is Large ribosomal subunit protein uL3.